Consider the following 326-residue polypeptide: Fructose-1,6-bisphosphatase class 1 (326 aa).

4 residues coordinate Mg(2+): Glu-90, Asp-111, Leu-113, and Asp-114. Residues 114 to 117 (DGSS), Tyr-222, and Lys-253 contribute to the substrate site. Glu-259 contributes to the Mg(2+) binding site.

Belongs to the FBPase class 1 family. As to quaternary structure, homotetramer. Mg(2+) serves as cofactor.

The protein localises to the cytoplasm. The catalysed reaction is beta-D-fructose 1,6-bisphosphate + H2O = beta-D-fructose 6-phosphate + phosphate. Its pathway is carbohydrate biosynthesis; gluconeogenesis. The chain is Fructose-1,6-bisphosphatase class 1 from Citrifermentans bemidjiense (strain ATCC BAA-1014 / DSM 16622 / JCM 12645 / Bem) (Geobacter bemidjiensis).